Consider the following 614-residue polypeptide: MSENKLFCAIVFLTSLFCSTCSQGTRFVHSAALDAERRYNIKWGFDESTITFEIEVETRGYVGFGLSPTGAMSSSDIVIGGVLNGSPYLLDYFTDSNRKVHRDPLQNYELLYGRENDTHTVLAFSRNLQTCDDNDKIITGSTVRVIWAFHAEDVGESGLVYHGMNRGRKSLRLLNPGTGPSIPAGTAFFDLQNKEVPVPHKDTTYWCQIFRFPEMKKKHHVIRIEPLIQKGHENLVHHILLYQCDSNLNKSEVNRGHECYHPNMPDSFLTCETVLFAWAIGGEGFTYPPHVGMSIGTSIDPVYVQLEIHFDNPSLQGGIVDSSGLRLYYSPSLRRYDAGVIETGVWVSLYHMLPPGMTDYITEGHCTQECLQESLDSEMPSGVHVFAVLLHAHLAGRAITARHFRQQLELQPLASDDQFDFNFQEFQPLSQERLILPGDSLITECRYNTKGRMNMTWGGLSTREEMCLSFLLYYPRVNLAKCESLPEIAGQLKFIGVTEIQEPVTTWPFVIKSPKKYSNLSFTEAMDKYKWTMKKGKSFNDIVRKLPMNVRCSKTGQDEWSIQGMIVSPPEVRSEQTSTAVVACRKDSAIQCEHSLALLLTACLLLILQTCLHL.

The signal sequence occupies residues 1 to 22 (MSENKLFCAIVFLTSLFCSTCS). Residues 23–593 (QGTRFVHSAA…CRKDSAIQCE (571 aa)) are Lumenal-facing. The 114-residue stretch at 37–150 (RRYNIKWGFD…STVRVIWAFH (114 aa)) folds into the DOMON domain. The N-linked (GlcNAc...) asparagine glycan is linked to asparagine 116. The active site involves tyrosine 205. Disulfide bonds link cysteine 207-cysteine 259 and cysteine 244-cysteine 271. Cu cation-binding residues include histidine 237 and histidine 238. Asparagine 249 carries an N-linked (GlcNAc...) asparagine glycan. 3 residues coordinate Cu cation: histidine 309, histidine 391, and histidine 393. Intrachain disulfides connect cysteine 366–cysteine 482, cysteine 370–cysteine 552, and cysteine 445–cysteine 467. The active site involves histidine 391. The N-linked (GlcNAc...) asparagine glycan is linked to asparagine 454. Methionine 466 is a binding site for Cu cation. Asparagine 519 is a glycosylation site (N-linked (GlcNAc...) asparagine). Residues 594–612 (HSLALLLTACLLLILQTCL) traverse the membrane as a helical segment.

It belongs to the copper type II ascorbate-dependent monooxygenase family. It depends on Cu(2+) as a cofactor.

Its subcellular location is the endoplasmic reticulum membrane. In Danio rerio (Zebrafish), this protein is DBH-like monooxygenase protein 1 homolog (moxd1).